Reading from the N-terminus, the 453-residue chain is Ethanolamine ammonia-lyase large subunit (453 aa).

Substrate-binding positions include 160–162 (RLQ) and asparagine 193. Residues proline 194 and glutamine 246 each contribute to the adenosylcob(III)alamin site. Glutamate 287 is a binding site for substrate. Serine 295 is an adenosylcob(III)alamin binding site. Aspartate 362 lines the substrate pocket. Position 401 (methionine 401) interacts with adenosylcob(III)alamin.

Belongs to the EutB family. As to quaternary structure, the basic unit is a heterodimer which dimerizes to form tetramers. The heterotetramers trimerize; 6 large subunits form a core ring with 6 small subunits projecting outwards. Requires adenosylcob(III)alamin as cofactor.

The protein resides in the bacterial microcompartment. The enzyme catalyses ethanolamine = acetaldehyde + NH4(+). Its pathway is amine and polyamine degradation; ethanolamine degradation. In terms of biological role, catalyzes the deamination of various vicinal amino-alcohols to oxo compounds. Allows this organism to utilize ethanolamine as the sole source of nitrogen and carbon in the presence of vitamin B12. The sequence is that of Ethanolamine ammonia-lyase large subunit from Escherichia coli O157:H7.